Reading from the N-terminus, the 130-residue chain is S-adenosylmethionine decarboxylase proenzyme (130 aa).

Catalysis depends on S63, which acts as the Schiff-base intermediate with substrate; via pyruvic acid. A Pyruvic acid (Ser); by autocatalysis modification is found at S63. H68 functions as the Proton acceptor; for processing activity in the catalytic mechanism. The active-site Proton donor; for catalytic activity is C83.

This sequence belongs to the prokaryotic AdoMetDC family. Type 1 subfamily. As to quaternary structure, heterotetramer of two alpha and two beta chains arranged as a dimer of alpha/beta heterodimers. It depends on pyruvate as a cofactor. Post-translationally, is synthesized initially as an inactive proenzyme. Formation of the active enzyme involves a self-maturation process in which the active site pyruvoyl group is generated from an internal serine residue via an autocatalytic post-translational modification. Two non-identical subunits are generated from the proenzyme in this reaction, and the pyruvate is formed at the N-terminus of the alpha chain, which is derived from the carboxyl end of the proenzyme. The post-translation cleavage follows an unusual pathway, termed non-hydrolytic serinolysis, in which the side chain hydroxyl group of the serine supplies its oxygen atom to form the C-terminus of the beta chain, while the remainder of the serine residue undergoes an oxidative deamination to produce ammonia and the pyruvoyl group blocking the N-terminus of the alpha chain.

It carries out the reaction S-adenosyl-L-methionine + H(+) = S-adenosyl 3-(methylsulfanyl)propylamine + CO2. It functions in the pathway amine and polyamine biosynthesis; S-adenosylmethioninamine biosynthesis; S-adenosylmethioninamine from S-adenosyl-L-methionine: step 1/1. Functionally, catalyzes the decarboxylation of S-adenosylmethionine to S-adenosylmethioninamine (dcAdoMet), the propylamine donor required for the synthesis of the polyamines spermine and spermidine from the diamine putrescine. This is S-adenosylmethionine decarboxylase proenzyme from Thermosipho africanus (strain TCF52B).